Reading from the N-terminus, the 129-residue chain is NADPH-dependent 7-cyano-7-deazaguanine reductase (129 aa).

The active-site Thioimide intermediate is C43. The active-site Proton donor is the D50. Substrate-binding positions include 65–67 (VEL) and 84–85 (HE).

This sequence belongs to the GTP cyclohydrolase I family. QueF type 1 subfamily.

The protein localises to the cytoplasm. It carries out the reaction 7-aminomethyl-7-carbaguanine + 2 NADP(+) = 7-cyano-7-deazaguanine + 2 NADPH + 3 H(+). The protein operates within tRNA modification; tRNA-queuosine biosynthesis. Catalyzes the NADPH-dependent reduction of 7-cyano-7-deazaguanine (preQ0) to 7-aminomethyl-7-deazaguanine (preQ1). The sequence is that of NADPH-dependent 7-cyano-7-deazaguanine reductase from Aquifex aeolicus (strain VF5).